Reading from the N-terminus, the 285-residue chain is Chromatin modification-related protein YNG2 (285 aa).

A coiled-coil region spans residues 19–54; that stretch reads LEVKHLLQELKNKDVQLQEARKRYQTKDNQIHKFIR. The span at 138-165 shows a compositional bias: polar residues; the sequence is NGLSDNLSGTTTPRGHSASTPVADNAAN. Residues 138 to 218 are disordered; it reads NGLSDNLSGT…SRPNEGPGNN (81 aa). The span at 193–207 shows a compositional bias: basic and acidic residues; that stretch reads MKSEDFEDKKYDNDS. Residues 225–276 form a PHD-type zinc finger; it reads NLYCFCQRVSFGEMIGCDNDDCKFEWFHWSCVGITAPPKDDEIWYCPDCAPK. Positions 228, 230, 241, 246, 252, 255, 270, and 273 each coordinate Zn(2+).

Belongs to the ING family. As to quaternary structure, interacts with H3K4me3 and to a lesser extent with H3K4me2. Component of the NuA4 histone acetyltransferase complex.

Its subcellular location is the nucleus. In terms of biological role, component of the NuA4 histone acetyltransferase complex which is involved in transcriptional activation of selected genes principally by acetylation of nucleosomal histone H4 and H2A. The NuA4 complex is also involved in DNA repair. Involved in cell cycle progression and meiosis. The polypeptide is Chromatin modification-related protein YNG2 (YNG2) (Debaryomyces hansenii (strain ATCC 36239 / CBS 767 / BCRC 21394 / JCM 1990 / NBRC 0083 / IGC 2968) (Yeast)).